We begin with the raw amino-acid sequence, 216 residues long: V-type ATP synthase subunit D (216 aa).

Belongs to the V-ATPase D subunit family.

Functionally, produces ATP from ADP in the presence of a proton gradient across the membrane. In Clostridium novyi (strain NT), this protein is V-type ATP synthase subunit D.